A 135-amino-acid polypeptide reads, in one-letter code: Beta/delta-urticatoxin-Ui2a (135 aa).

The first 18 residues, 1–18 (MGAIVLVAIMALVASSSA), serve as a signal peptide directing secretion. Positions 19-72 (FSDDEQNMMNAEGEKGIRSYSAADDVSDMIESLFVNSGNRNLVLMMLSGRPQPN) are excised as a propeptide. 6 cysteine pairs are disulfide-bonded: Cys-75-Cys-92, Cys-82-Cys-97, Cys-91-Cys-105, Cys-107-Cys-121, Cys-114-Cys-126, and Cys-120-Cys-134.

The protein belongs to the urticatoxin-2 family. Expressed in trichomes, that are stiff epidermal hairs located on the surface of petioles and leaves.

It localises to the secreted. Functionally, plant defense neurotoxin that causes pain and systemic symptoms in mammals via modulation of voltage-gated sodium channels (Nav). Potent modulator of human Nav1.5/SCN5A (EC(50)=55 nM), Nav1.6/SCN8A (EC(50)=0.86 nM), and Nav1.7/SCN9A (EC(50)=208 nM), where it shifts the activation threshold to more negative potentials and delays fast inactivation. Also shifts the voltage-dependence of steady-state fast inactivation of Nav1.6/SCN8A, but not that of Nav1.5/SCN5A or Nav1.7/SCN9A. On Nav1.7/SCN9A, principally acts by binding to extracellular loops of domain IV (Nav site 3). In vivo, intraplantar injection into mice causes numerous dose-dependent, immediate, and long-lasting spontaneous pain behaviors, while no swelling is observed in the injected paw. At the highest doses tested, systemic symptoms including hypokinesia and hypersalivation are observed. The protein is Beta/delta-urticatoxin-Ui2a of Urtica incisa (Scrub nettle).